Reading from the N-terminus, the 281-residue chain is Bifunctional protein FolD (281 aa).

Residues 165–167, threonine 192, and valine 233 each bind NADP(+); that span reads GRG.

This sequence belongs to the tetrahydrofolate dehydrogenase/cyclohydrolase family. In terms of assembly, homodimer.

The catalysed reaction is (6R)-5,10-methylene-5,6,7,8-tetrahydrofolate + NADP(+) = (6R)-5,10-methenyltetrahydrofolate + NADPH. It carries out the reaction (6R)-5,10-methenyltetrahydrofolate + H2O = (6R)-10-formyltetrahydrofolate + H(+). The protein operates within one-carbon metabolism; tetrahydrofolate interconversion. Functionally, catalyzes the oxidation of 5,10-methylenetetrahydrofolate to 5,10-methenyltetrahydrofolate and then the hydrolysis of 5,10-methenyltetrahydrofolate to 10-formyltetrahydrofolate. In Mycobacterium ulcerans (strain Agy99), this protein is Bifunctional protein FolD.